A 151-amino-acid polypeptide reads, in one-letter code: Peptide methionine sulfoxide reductase MsrB (151 aa).

Positions 9-132 (DGELKRTLTK…NSAALKFIPF (124 aa)) constitute a MsrB domain. Cysteine 121 (nucleophile) is an active-site residue.

It belongs to the MsrB Met sulfoxide reductase family.

It catalyses the reaction L-methionyl-[protein] + [thioredoxin]-disulfide + H2O = L-methionyl-(R)-S-oxide-[protein] + [thioredoxin]-dithiol. In Mycoplasma pneumoniae (strain ATCC 29342 / M129 / Subtype 1) (Mycoplasmoides pneumoniae), this protein is Peptide methionine sulfoxide reductase MsrB.